A 689-amino-acid chain; its full sequence is Elongation factor G (689 aa).

The tr-type G domain occupies 8–282; that stretch reads KKTRNIGIMA…AVIDYLPSPV (275 aa). Residues 17–24, 81–85, and 135–138 each bind GTP; these read AHIDAGKT, DTPGH, and NKMD.

This sequence belongs to the TRAFAC class translation factor GTPase superfamily. Classic translation factor GTPase family. EF-G/EF-2 subfamily.

Its subcellular location is the cytoplasm. Catalyzes the GTP-dependent ribosomal translocation step during translation elongation. During this step, the ribosome changes from the pre-translocational (PRE) to the post-translocational (POST) state as the newly formed A-site-bound peptidyl-tRNA and P-site-bound deacylated tRNA move to the P and E sites, respectively. Catalyzes the coordinated movement of the two tRNA molecules, the mRNA and conformational changes in the ribosome. In Halothermothrix orenii (strain H 168 / OCM 544 / DSM 9562), this protein is Elongation factor G.